The chain runs to 324 residues: Fe-S cluster assembly protein dre2 (324 aa).

The interval 28–158 is N-terminal SAM-like domain; the sequence is GSPSKRTLLL…KMDQPKSFAI (131 aa). The interval 159 to 217 is linker; sequence PLRRNGKKKDAAKTETFAPAPAPAPPVQPVTVGMINNDDDYENDDDLIDEDTLLSDEDL. 4 residues coordinate [2Fe-2S] cluster: Cys-226, Cys-237, Cys-240, and Cys-242. The segment at 226–242 is fe-S binding site A; it reads CQPKPGRRRRACKDCTC. [4Fe-4S] cluster is bound by residues Cys-287, Cys-290, Cys-298, and Cys-301. 2 short sequence motifs (cx2C motif) span residues 287-290 and 298-301; these read CGNC and CAGC. The interval 287 to 301 is fe-S binding site B; that stretch reads CGNCALGDAFRCAGC.

It belongs to the anamorsin family. As to quaternary structure, monomer. Interacts with tah18. Interacts with mia40. [2Fe-2S] cluster serves as cofactor. Requires [4Fe-4S] cluster as cofactor.

The protein resides in the cytoplasm. It is found in the mitochondrion intermembrane space. In terms of biological role, component of the cytosolic iron-sulfur (Fe-S) protein assembly (CIA) machinery required for the maturation of extramitochondrial Fe-S proteins. Part of an electron transfer chain functioning in an early step of cytosolic Fe-S biogenesis, facilitating the de novo assembly of a [4Fe-4S] cluster on the scaffold complex cfd1-nbp35. Electrons are transferred to dre2 from NADPH via the FAD- and FMN-containing protein tah18. Tah18-dre2 are also required for the assembly of the diferric tyrosyl radical cofactor of ribonucleotide reductase (RNR), probably by providing electrons for reduction during radical cofactor maturation in the catalytic small subunit rnr2. This Aspergillus niger (strain ATCC MYA-4892 / CBS 513.88 / FGSC A1513) protein is Fe-S cluster assembly protein dre2.